Here is a 435-residue protein sequence, read N- to C-terminus: S-phase entry cyclin-5 (435 aa).

2 disordered regions span residues 36-70 (KRALSKNDSSSKQQVQDSKPRRALTDVPVNNNPLS) and 104-126 (NDRTAAEQEEEEEEEGEDDDAAS). Residues 41–52 (KNDSSSKQQVQD) show a composition bias toward low complexity. The segment covering 110–124 (EQEEEEEEEGEDDDA) has biased composition (acidic residues).

This sequence belongs to the cyclin family. Cyclin AB subfamily.

Required for efficient progression through S phase and possibly for the normal progression through meiosis. Interacts with CDC28. In Saccharomyces cerevisiae (strain ATCC 204508 / S288c) (Baker's yeast), this protein is S-phase entry cyclin-5 (CLB5).